Reading from the N-terminus, the 279-residue chain is Large ribosomal subunit protein uL2 (279 aa).

2 disordered regions span residues 32-53 (SLLR…TTRH) and 225-279 (AMNP…KKRK). Over residues 253-268 (KEGRTRHINKPSDKLI) the composition is skewed to basic and acidic residues. Basic residues predominate over residues 269-279 (VRRRNAGKKRK).

It belongs to the universal ribosomal protein uL2 family. Part of the 50S ribosomal subunit. Forms a bridge to the 30S subunit in the 70S ribosome.

Functionally, one of the primary rRNA binding proteins. Required for association of the 30S and 50S subunits to form the 70S ribosome, for tRNA binding and peptide bond formation. It has been suggested to have peptidyltransferase activity; this is somewhat controversial. Makes several contacts with the 16S rRNA in the 70S ribosome. The chain is Large ribosomal subunit protein uL2 from Clavibacter michiganensis subsp. michiganensis (strain NCPPB 382).